A 378-amino-acid polypeptide reads, in one-letter code: Atypical chemokine receptor 2 (378 aa).

The Extracellular segment spans residues 1–49 (MPTVASPLPLTTVGSENSSSIYDYDYLDDMTILVCRKDEVLSFGRVFLP). N-linked (GlcNAc...) asparagine glycosylation occurs at Asn17. A helical transmembrane segment spans residues 50 to 70 (VVYSLIFVLGLAGNLLLLVVL). Residues 71–91 (LHSAPRRRTMELYLLNLAVSN) are Cytoplasmic-facing. The chain crosses the membrane as a helical span at residues 92–112 (LLFVVTMPFWAISVAWHWVFG). Residues 113 to 117 (SFLCK) lie on the Extracellular side of the membrane. An intrachain disulfide couples Cys116 to Cys194. A helical membrane pass occupies residues 118–139 (VISTLYSINFYCGIFFITCMSL). The Cytoplasmic portion of the chain corresponds to 140-161 (DKYLEIVHAQPLHRPKAQFRNL). Residues 162–182 (LLIVMVWITSLAISVPEMVFV) traverse the membrane as a helical segment. At 183 to 216 (QIHQTLDGVWHCYADFGGHATIWKLYLRFQLNLL) the chain is on the extracellular side. A helical membrane pass occupies residues 217–237 (GFLLPLLAMIFFYSRIGCVLV). The Cytoplasmic segment spans residues 238–249 (RLRPPGQGRALR). Residues 250–270 (MAAALVIVFFMLWFPYNLTLF) form a helical membrane-spanning segment. At 271–292 (LHSLLDLHVFGNCEISHRLDYT) the chain is on the extracellular side. Residues 293-313 (LQVTESLAFSHCCFTPVLYAF) traverse the membrane as a helical segment. Residues 314 to 378 (CSHRFRRYLK…SLNKGEMGNT (65 aa)) are Cytoplasmic-facing. The segment at 326–378 (LSVMLRWHQAPGTPSSNHSESSRVTAQEDVVSMNDLGERQSEDSLNKGEMGNT) is C-terminal cytoplasmic tail.

The protein belongs to the G-protein coupled receptor 1 family. Atypical chemokine receptor subfamily. Phosphorylated on serine residues in the C-terminal cytoplasmic tail. As to expression, expressed on apoptotic neutrophils (at protein level).

It localises to the early endosome. The protein resides in the recycling endosome. Its subcellular location is the cell membrane. Functionally, atypical chemokine receptor that controls chemokine levels and localization via high-affinity chemokine binding that is uncoupled from classic ligand-driven signal transduction cascades, resulting instead in chemokine sequestration, degradation, or transcytosis. Also known as interceptor (internalizing receptor) or chemokine-scavenging receptor or chemokine decoy receptor. Acts as a receptor for chemokines including CCL2, CCL3, CCL3L1, CCL4, CCL5, CCL7, CCL8, CCL11, CCL13, CCL17, CCL22, CCL23, CCL24, SCYA2/MCP-1, SCY3/MIP-1-alpha, SCYA5/RANTES and SCYA7/MCP-3. Upon active ligand stimulation, activates a beta-arrestin 1 (ARRB1)-dependent, G protein-independent signaling pathway that results in the phosphorylation of the actin-binding protein cofilin (CFL1) through a RAC1-PAK1-LIMK1 signaling pathway. Activation of this pathway results in up-regulation of ACKR2 from endosomal compartment to cell membrane, increasing its efficiency in chemokine uptake and degradation. By scavenging chemokines in tissues, on the surfaces of lymphatic vessels, and in placenta, plays an essential role in the resolution (termination) of the inflammatory response and in the regulation of adaptive immune responses. Plays a major role in the immune silencing of macrophages during the resolution of inflammation. Acts as a regulator of inflammatory leukocyte interactions with lymphatic endothelial cells (LECs) and is required for immature/mature dendritic cells discrimination by LECs. This chain is Atypical chemokine receptor 2 (Ackr2), found in Mus musculus (Mouse).